The primary structure comprises 750 residues: NAD(P)H-quinone oxidoreductase subunit 5, chloroplastic (750 aa).

16 consecutive transmembrane segments (helical) span residues 9–29 (WIIP…LLLF), 40–60 (WAFT…NLSI), 89–109 (IDPL…MVLI), 125–145 (FAYM…SNLI), 147–167 (IYIF…FWFT), 185–205 (GDFG…SFEF), 230–250 (AALL…HIWL), 258–278 (TPIS…FLVA), 283–303 (LFIV…ITVL), 327–347 (LGYM…FHLI), 354–374 (ALLF…VGYS), 396–416 (TSFL…CFWS), 425–445 (WLYS…TAFY), 548–568 (LFPL…GIPF), 607–627 (IFSV…YKPI), and 724–744 (LFFY…FYLF).

The protein belongs to the complex I subunit 5 family. In terms of assembly, NDH is composed of at least 16 different subunits, 5 of which are encoded in the nucleus.

The protein localises to the plastid. Its subcellular location is the chloroplast thylakoid membrane. It carries out the reaction a plastoquinone + NADH + (n+1) H(+)(in) = a plastoquinol + NAD(+) + n H(+)(out). The catalysed reaction is a plastoquinone + NADPH + (n+1) H(+)(in) = a plastoquinol + NADP(+) + n H(+)(out). Functionally, NDH shuttles electrons from NAD(P)H:plastoquinone, via FMN and iron-sulfur (Fe-S) centers, to quinones in the photosynthetic chain and possibly in a chloroplast respiratory chain. The immediate electron acceptor for the enzyme in this species is believed to be plastoquinone. Couples the redox reaction to proton translocation, and thus conserves the redox energy in a proton gradient. This chain is NAD(P)H-quinone oxidoreductase subunit 5, chloroplastic (ndhF), found in Tecoma stans (Yellow bells).